We begin with the raw amino-acid sequence, 146 residues long: Histone H2A.1 (146 aa).

M1 carries the post-translational modification N-acetylmethionine. Residues M1–K24 form a disordered region. The SPKK motif motif lies at S142–K145.

It belongs to the histone H2A family. The nucleosome is a histone octamer containing two molecules each of H2A, H2B, H3 and H4 assembled in one H3-H4 heterotetramer and two H2A-H2B heterodimers. The octamer wraps approximately 147 bp of DNA. High expression in meristematic tissues, in cells of the root pericycle and in shoot cortical cells undergoing endoduplication of their DNA.

Its subcellular location is the nucleus. It localises to the chromosome. Its function is as follows. Core component of nucleosome. Nucleosomes wrap and compact DNA into chromatin, limiting DNA accessibility to the cellular machineries which require DNA as a template. Histones thereby play a central role in transcription regulation, DNA repair, DNA replication and chromosomal stability. DNA accessibility is regulated via a complex set of post-translational modifications of histones, also called histone code, and nucleosome remodeling. The sequence is that of Histone H2A.1 from Solanum lycopersicum (Tomato).